We begin with the raw amino-acid sequence, 235 residues long: 7-cyano-7-deazaguanine synthase (235 aa).

Residue 9 to 19 (FSGGQDSTTCL) participates in ATP binding. Cysteine 197, cysteine 212, cysteine 215, and cysteine 218 together coordinate Zn(2+).

It belongs to the QueC family. Zn(2+) serves as cofactor.

It carries out the reaction 7-carboxy-7-deazaguanine + NH4(+) + ATP = 7-cyano-7-deazaguanine + ADP + phosphate + H2O + H(+). It functions in the pathway purine metabolism; 7-cyano-7-deazaguanine biosynthesis. Its function is as follows. Catalyzes the ATP-dependent conversion of 7-carboxy-7-deazaguanine (CDG) to 7-cyano-7-deazaguanine (preQ(0)). The protein is 7-cyano-7-deazaguanine synthase of Polaromonas sp. (strain JS666 / ATCC BAA-500).